The primary structure comprises 821 residues: Pentatricopeptide repeat-containing protein At4g04790, mitochondrial (821 aa).

A mitochondrion-targeting transit peptide spans 1-74 (MVVSKVNKSL…KLLHVTTSDK (74 aa)). PPR repeat units lie at residues 372-406 (SSTS…GLMI), 407-441 (SADI…SVKP), 442-476 (NTEN…NLEP), 477-511 (NSSM…GVKP), 512-542 (DSIT…AGVQ), 544-574 (TKRI…PDVP), and 578-612 (QNEL…ECHV). Residues 801 to 821 (AFSQAPNKKKPKKKMIVLSTK) form a disordered region.

It belongs to the PPR family. P subfamily.

Its subcellular location is the mitochondrion. This chain is Pentatricopeptide repeat-containing protein At4g04790, mitochondrial, found in Arabidopsis thaliana (Mouse-ear cress).